Consider the following 347-residue polypeptide: Anthranilate phosphoribosyltransferase (347 aa).

Residues Gly-88, 91-92 (GD), Thr-96, 98-101 (NIST), 116-124 (KHGGRSVSS), and Ser-128 each bind 5-phospho-alpha-D-ribose 1-diphosphate. Residue Gly-88 participates in anthranilate binding. Residue Ser-100 participates in Mg(2+) binding. Arg-174 is a binding site for anthranilate. Mg(2+) is bound by residues Asp-233 and Glu-234.

Belongs to the anthranilate phosphoribosyltransferase family. Homodimer. Mg(2+) is required as a cofactor.

It catalyses the reaction N-(5-phospho-beta-D-ribosyl)anthranilate + diphosphate = 5-phospho-alpha-D-ribose 1-diphosphate + anthranilate. The protein operates within amino-acid biosynthesis; L-tryptophan biosynthesis; L-tryptophan from chorismate: step 2/5. Catalyzes the transfer of the phosphoribosyl group of 5-phosphorylribose-1-pyrophosphate (PRPP) to anthranilate to yield N-(5'-phosphoribosyl)-anthranilate (PRA). This chain is Anthranilate phosphoribosyltransferase, found in Polaromonas sp. (strain JS666 / ATCC BAA-500).